A 189-amino-acid polypeptide reads, in one-letter code: Leucine repeat adapter protein 25 (189 aa).

Residue S28 is modified to Phosphoserine. The segment at 55–81 (LSRAARAPDGPRHAAGSANLGSAAGPR) is disordered. Over residues 68–79 (AAGSANLGSAAG) the composition is skewed to low complexity. The stretch at 86–114 (LDSALAALRKEMVGLRQLDMSLLCQLWGL) is one LRR repeat. Positions 141 to 174 (DSSYPPDAGLSDDDEPPDASLPPDPPPLTVPQTH) are disordered. Residues 159-169 (ASLPPDPPPLT) show a composition bias toward pro residues. The residue at position 188 (S188) is a Phosphoserine.

This sequence belongs to the FAM89 family. In terms of assembly, interacts with SKI. Interacts (via LRR repeat) with CDC42BPA (via AGC-kinase C-terminal domain) and CDC42BPB (via AGC-kinase C-terminal domain). Interacts (via LRR repeat) with LIMK1 (via LIM zinc-binding domains). Forms a tripartite complex with CDC42BPA, CDC42BPB and LIMK1.

The protein localises to the cytoplasm. Its subcellular location is the cell projection. The protein resides in the lamellipodium. Functionally, negatively regulates TGF-beta-induced signaling; in cooperation with SKI prevents the translocation of SMAD2 from the nucleus to the cytoplasm in response to TGF-beta. Acts as an adapter that mediates the specific recognition of LIMK1 by CDC42BPA and CDC42BPB in the lamellipodia. LRAP25-mediated CDC42BPA/CDC42BPB targeting to LIMK1 and the lamellipodium results in LIMK1 activation and the subsequent phosphorylation of CFL1 which is important for lamellipodial F-actin regulation. This chain is Leucine repeat adapter protein 25, found in Rattus norvegicus (Rat).